Consider the following 738-residue polypeptide: Ethylene receptor 1 (738 aa).

3 helical membrane-spanning segments follow: residues 23–43, 53–73, and 92–112; these read ISDFFIAIAYFSIPLELIYFV, WVLVQFGAFIVLCGATHLINL, and VLTAVVSCATALMLVHIIPDL. 2 residues coordinate Cu cation: cysteine 65 and histidine 69. The region spanning 158–307 is the GAF domain; sequence DRHTILKTTL…VVADQVAVAL (150 aa). The Histidine kinase domain occupies 350–585; it reads VMNHEMRTPM…IFDVKLGISE (236 aa). Phosphohistidine; by autocatalysis is present on histidine 353. Residues 470–473, aspartate 513, lysine 529, serine 544, and leucine 548 each bind ADP; that span reads NAVK. The Response regulatory domain maps to 611-729; it reads KVLVMDENGV…NIRDVLSDLL (119 aa). At aspartate 659 the chain carries 4-aspartylphosphate. Lysine 714 participates in a covalent cross-link: Glycyl lysine isopeptide (Lys-Gly) (interchain with G-Cter in ubiquitin).

This sequence belongs to the ethylene receptor family. As to quaternary structure, homodimer; disulfide-linked. Heteromer with ERS1, ERS2, ETR2 and EIN4. Interacts with AHP1, AHP2 and AHP3. Interacts with RTE1. Interacts with EIN2. Cu cation serves as cofactor. In terms of processing, autophosphorylated. Phosphorylation at His-353 modulates the interaction with EIN2. In terms of tissue distribution, leaves, roots, stems, seedlings, flowers, anthers, carpels and ovules.

It is found in the endoplasmic reticulum membrane. It catalyses the reaction ATP + protein L-histidine = ADP + protein N-phospho-L-histidine.. Ethylene receptor related to bacterial two-component regulators. Acts as a redundant negative regulator of ethylene signaling. In the presence of ethylene, the auto-kinase activity of ETR1 is inhibited and the non-phosphorylated kinase domain binds tightly to the corresponding domain of EIN2. In Arabidopsis thaliana (Mouse-ear cress), this protein is Ethylene receptor 1.